The chain runs to 232 residues: 7-cyano-7-deazaguanine synthase (232 aa).

Residue 8-18 (FSGGQDSTTCL) participates in ATP binding. Zn(2+)-binding residues include cysteine 187, cysteine 196, cysteine 199, and cysteine 202.

This sequence belongs to the QueC family. The cofactor is Zn(2+).

It carries out the reaction 7-carboxy-7-deazaguanine + NH4(+) + ATP = 7-cyano-7-deazaguanine + ADP + phosphate + H2O + H(+). The protein operates within purine metabolism; 7-cyano-7-deazaguanine biosynthesis. Catalyzes the ATP-dependent conversion of 7-carboxy-7-deazaguanine (CDG) to 7-cyano-7-deazaguanine (preQ(0)). This chain is 7-cyano-7-deazaguanine synthase, found in Shewanella denitrificans (strain OS217 / ATCC BAA-1090 / DSM 15013).